A 287-amino-acid chain; its full sequence is Efem/EfeO family lipoprotein (287 aa).

The N-terminal stretch at 1 to 17 (MKKLPTILLASSLLLAA) is a signal peptide. A lipid anchor (N-palmitoyl cysteine) is attached at Cys-18. The S-diacylglycerol cysteine moiety is linked to residue Cys-18. The tract at residues 20–50 (NNSHSDDNSNKDKQSQSSKGENKASLQKATK) is disordered. The segment covering 23–33 (HSDDNSNKDKQ) has biased composition (basic and acidic residues).

The protein belongs to the EfeM/EfeO family.

The protein localises to the cell membrane. This Staphylococcus haemolyticus (strain JCSC1435) protein is Efem/EfeO family lipoprotein.